The sequence spans 464 residues: Siroheme synthase (464 aa).

Positions 1-203 are precorrin-2 dehydrogenase /sirohydrochlorin ferrochelatase; sequence MEFLPLFHNL…GQGDEAERLL (203 aa). NAD(+)-binding positions include 22 to 23 and 43 to 44; these read EI and PQ. Ser-128 bears the Phosphoserine mark. The segment at 216 to 464 is uroporphyrinogen-III C-methyltransferase; it reads GEVYLVGAGP…KWFEGAQSQV (249 aa). Pro-225 serves as a coordination point for S-adenosyl-L-methionine. The Proton acceptor role is filled by Asp-248. The active-site Proton donor is the Lys-270. Residues 301-303, Ile-306, 331-332, Met-383, and Gly-412 contribute to the S-adenosyl-L-methionine site; these read GGD and TA.

In the N-terminal section; belongs to the precorrin-2 dehydrogenase / sirohydrochlorin ferrochelatase family. It in the C-terminal section; belongs to the precorrin methyltransferase family.

The enzyme catalyses uroporphyrinogen III + 2 S-adenosyl-L-methionine = precorrin-2 + 2 S-adenosyl-L-homocysteine + H(+). It catalyses the reaction precorrin-2 + NAD(+) = sirohydrochlorin + NADH + 2 H(+). The catalysed reaction is siroheme + 2 H(+) = sirohydrochlorin + Fe(2+). It participates in cofactor biosynthesis; adenosylcobalamin biosynthesis; precorrin-2 from uroporphyrinogen III: step 1/1. Its pathway is cofactor biosynthesis; adenosylcobalamin biosynthesis; sirohydrochlorin from precorrin-2: step 1/1. The protein operates within porphyrin-containing compound metabolism; siroheme biosynthesis; precorrin-2 from uroporphyrinogen III: step 1/1. It functions in the pathway porphyrin-containing compound metabolism; siroheme biosynthesis; siroheme from sirohydrochlorin: step 1/1. It participates in porphyrin-containing compound metabolism; siroheme biosynthesis; sirohydrochlorin from precorrin-2: step 1/1. Functionally, multifunctional enzyme that catalyzes the SAM-dependent methylations of uroporphyrinogen III at position C-2 and C-7 to form precorrin-2 via precorrin-1. Then it catalyzes the NAD-dependent ring dehydrogenation of precorrin-2 to yield sirohydrochlorin. Finally, it catalyzes the ferrochelation of sirohydrochlorin to yield siroheme. The protein is Siroheme synthase of Pseudomonas fluorescens (strain SBW25).